A 600-amino-acid polypeptide reads, in one-letter code: NADH-quinone oxidoreductase subunit C/D (600 aa).

Residues 1 to 190 are NADH dehydrogenase I subunit C; it reads MVNNMTDLTA…DPFELTKAKQ (190 aa). Positions 214 to 600 are NADH dehydrogenase I subunit D; the sequence is DFMFLNLGPN…IDFVMSDVDR (387 aa).

This sequence in the N-terminal section; belongs to the complex I 30 kDa subunit family. It in the C-terminal section; belongs to the complex I 49 kDa subunit family. As to quaternary structure, NDH-1 is composed of 13 different subunits. Subunits NuoB, CD, E, F, and G constitute the peripheral sector of the complex.

The protein localises to the cell inner membrane. The enzyme catalyses a quinone + NADH + 5 H(+)(in) = a quinol + NAD(+) + 4 H(+)(out). NDH-1 shuttles electrons from NADH, via FMN and iron-sulfur (Fe-S) centers, to quinones in the respiratory chain. The immediate electron acceptor for the enzyme in this species is believed to be ubiquinone. Couples the redox reaction to proton translocation (for every two electrons transferred, four hydrogen ions are translocated across the cytoplasmic membrane), and thus conserves the redox energy in a proton gradient. This chain is NADH-quinone oxidoreductase subunit C/D, found in Citrobacter koseri (strain ATCC BAA-895 / CDC 4225-83 / SGSC4696).